The primary structure comprises 234 residues: R-spondin-4 (234 aa).

The N-terminal stretch at Met1–Ala19 is a signal peptide. N-linked (GlcNAc...) asparagine glycosylation is present at Asn34. 11 disulfides stabilise this stretch: Cys35/Cys41, Cys38/Cys47, Cys50/Cys69, Cys73/Cys88, Cys91/Cys98, Cys95/Cys104, Cys107/Cys118, Cys122/Cys135, Cys139/Cys181, Cys150/Cys157, and Cys190/Cys196. Residues Val85–Ala128 form an FU repeat. In terms of domain architecture, TSP type-1 spans Glu138–Pro197. The segment at Cys190–Pro234 is disordered. Residues Gly203 to Asp216 are compositionally biased toward basic residues. Over residues Arg217 to Pro227 the composition is skewed to basic and acidic residues.

Belongs to the R-spondin family. Binds heparin. Interacts with LGR4, LGR5 and LGR6. In terms of processing, tyr-112 may be phosphorylated; however as this position is probably extracellular, the vivo relevance is not proven.

It is found in the secreted. Activator of the canonical Wnt signaling pathway by acting as a ligand for LGR4-6 receptors. Upon binding to LGR4-6 (LGR4, LGR5 or LGR6), LGR4-6 associate with phosphorylated LRP6 and frizzled receptors that are activated by extracellular Wnt receptors, triggering the canonical Wnt signaling pathway to increase expression of target genes. Also regulates the canonical Wnt/beta-catenin-dependent pathway and non-canonical Wnt signaling by acting as an inhibitor of ZNRF3, an important regulator of the Wnt signaling pathway. This Homo sapiens (Human) protein is R-spondin-4 (RSPO4).